We begin with the raw amino-acid sequence, 712 residues long: Amino-acid acetyltransferase, mitochondrial (712 aa).

Residues 1–47 constitute a mitochondrion transit peptide; sequence MFVRTCRSSCNAWTNATSTTQAGSLLPPNAHRSVVLTLSLQACSART. Positions 55–99 are disordered; that stretch reads FASTTSQSKRQEAEAEEKRQVSPRLGPSAPRSSYPSSAEARQKRD. Positions 63-74 are enriched in basic and acidic residues; sequence KRQEAEAEEKRQ. Positions 81 to 93 are enriched in low complexity; sequence PSAPRSSYPSSAE. In terms of domain architecture, N-acetyltransferase spans 534–702; sequence GVPRLRLTDT…YEDVCRNIAP (169 aa).

It belongs to the acetyltransferase family.

It localises to the mitochondrion. It catalyses the reaction L-glutamate + acetyl-CoA = N-acetyl-L-glutamate + CoA + H(+). Its pathway is amino-acid biosynthesis; L-arginine biosynthesis; N(2)-acetyl-L-ornithine from L-glutamate: step 1/4. Its activity is regulated as follows. Inhibited by arginine. Functionally, N-acetylglutamate synthase involved in arginine biosynthesis. The chain is Amino-acid acetyltransferase, mitochondrial (arg-14) from Neurospora crassa (strain ATCC 24698 / 74-OR23-1A / CBS 708.71 / DSM 1257 / FGSC 987).